Here is a 290-residue protein sequence, read N- to C-terminus: Arginine N-acetyltransferase avaD (290 aa).

157-163 provides a ligand contact to acetyl-CoA; that stretch reads NQAHFEA.

The protein belongs to the acetyltransferase family. GCN5 subfamily.

It participates in secondary metabolite metabolism. Its function is as follows. Arginine N-acetyltransferase; part of the cluster that mediates the biosynthesis of a highly modified cyclo-arginine-tryptophan dipeptide (cRW). Within the pathway, avaD catalyzes the N-acetylation of the guanidine group. The first step of the pathway is perfornmed by the arginine-containing cyclodipeptide synthase (RCPDS) avaA that acts as the scaffold-generating enzyme and is responsible for formation of the cyclo-Arg-Trp (cRW) diketopiperazine. AvaB then acts as a multifunctional flavoenzyme that is responsible for generating the cyclo-Arg-formylkynurenine DKP, which can be deformylated by avaC. AvaB then further catalyzes an additional N-oxidation followed by cyclization and dehydration. The next step is an N-acetylation of the guanidine group catalyzed by the arginine N-acetyltransferase avaD. The roles of the additional enzymes identified within the ava cluster still have to be determined. This Aspergillus versicolor protein is Arginine N-acetyltransferase avaD.